The sequence spans 112 residues: T cell receptor alpha variable 2 (112 aa).

A signal peptide spans 1-25; that stretch reads MALQSTLGAVWLGLLLNSLWKVAES. The region spanning 26 to 112 is the Ig-like domain; that stretch reads KDQVFQPSTV…DAAVYYCAVE (87 aa). A disulfide bridge links Cys47 with Cys109. 2 N-linked (GlcNAc...) asparagine glycosylation sites follow: Asn48 and Asn84.

Alpha-beta TR is a heterodimer composed of an alpha and beta chain; disulfide-linked. The alpha-beta TR is associated with the transmembrane signaling CD3 coreceptor proteins to form the TR-CD3 (TcR or TCR). The assembly of alpha-beta TR heterodimers with CD3 occurs in the endoplasmic reticulum where a single alpha-beta TR heterodimer associates with one CD3D-CD3E heterodimer, one CD3G-CD3E heterodimer and one CD247 homodimer forming a stable octameric structure. CD3D-CD3E and CD3G-CD3E heterodimers preferentially associate with TR alpha and TR beta chains, respectively. The association of the CD247 homodimer is the last step of TcR assembly in the endoplasmic reticulum and is required for transport to the cell surface.

It localises to the cell membrane. Functionally, v region of the variable domain of T cell receptor (TR) alpha chain that participates in the antigen recognition. Alpha-beta T cell receptors are antigen specific receptors which are essential to the immune response and are present on the cell surface of T lymphocytes. Recognize peptide-major histocompatibility (MH) (pMH) complexes that are displayed by antigen presenting cells (APC), a prerequisite for efficient T cell adaptive immunity against pathogens. Binding of alpha-beta TR to pMH complex initiates TR-CD3 clustering on the cell surface and intracellular activation of LCK that phosphorylates the ITAM motifs of CD3G, CD3D, CD3E and CD247 enabling the recruitment of ZAP70. In turn ZAP70 phosphorylates LAT, which recruits numerous signaling molecules to form the LAT signalosome. The LAT signalosome propagates signal branching to three major signaling pathways, the calcium, the mitogen-activated protein kinase (MAPK) kinase and the nuclear factor NF-kappa-B (NF-kB) pathways, leading to the mobilization of transcription factors that are critical for gene expression and essential for T cell growth and differentiation. The T cell repertoire is generated in the thymus, by V-(D)-J rearrangement. This repertoire is then shaped by intrathymic selection events to generate a peripheral T cell pool of self-MH restricted, non-autoaggressive T cells. Post-thymic interaction of alpha-beta TR with the pMH complexes shapes TR structural and functional avidity. The sequence is that of T cell receptor alpha variable 2 from Homo sapiens (Human).